We begin with the raw amino-acid sequence, 511 residues long: Probable DNA ligase (511 aa).

Residue glutamate 209 participates in ATP binding. Lysine 211 serves as the catalytic N6-AMP-lysine intermediate. The ATP site is built by arginine 216, arginine 231, glutamate 260, phenylalanine 299, arginine 371, and lysine 377.

Belongs to the ATP-dependent DNA ligase family. Mg(2+) serves as cofactor.

The enzyme catalyses ATP + (deoxyribonucleotide)n-3'-hydroxyl + 5'-phospho-(deoxyribonucleotide)m = (deoxyribonucleotide)n+m + AMP + diphosphate.. DNA ligase that seals nicks in double-stranded DNA during DNA replication, DNA recombination and DNA repair. The polypeptide is Probable DNA ligase (Mycolicibacterium gilvum (strain PYR-GCK) (Mycobacterium gilvum (strain PYR-GCK))).